Consider the following 433-residue polypeptide: Trigger factor (433 aa).

The 86-residue stretch at 161–246 (GKRVSIDFVG…VNKVEARELP (86 aa)) folds into the PPIase FKBP-type domain.

The protein belongs to the FKBP-type PPIase family. Tig subfamily.

The protein localises to the cytoplasm. It carries out the reaction [protein]-peptidylproline (omega=180) = [protein]-peptidylproline (omega=0). In terms of biological role, involved in protein export. Acts as a chaperone by maintaining the newly synthesized protein in an open conformation. Functions as a peptidyl-prolyl cis-trans isomerase. The sequence is that of Trigger factor from Vibrio cholerae serotype O1 (strain ATCC 39541 / Classical Ogawa 395 / O395).